We begin with the raw amino-acid sequence, 679 residues long: Methionine--tRNA ligase (679 aa).

Positions 12–22 match the 'HIGH' region motif; it reads PYANGPIHIGH. Zn(2+)-binding residues include Cys143, Cys146, Cys156, and Cys158. The 'KMSKS' region signature appears at 328–332; it reads KMSKS. Lys331 is a binding site for ATP. The segment at 537-564 is disordered; sequence MMEESKDEAAQETGAAATNPFNDSDQPL. Residues 577–679 enclose the tRNA-binding domain; sequence DFMKVDLRVA…EGALPGQRVH (103 aa).

Belongs to the class-I aminoacyl-tRNA synthetase family. MetG type 1 subfamily. In terms of assembly, homodimer. Zn(2+) serves as cofactor.

The protein localises to the cytoplasm. The enzyme catalyses tRNA(Met) + L-methionine + ATP = L-methionyl-tRNA(Met) + AMP + diphosphate. Its function is as follows. Is required not only for elongation of protein synthesis but also for the initiation of all mRNA translation through initiator tRNA(fMet) aminoacylation. This Rhodopirellula baltica (strain DSM 10527 / NCIMB 13988 / SH1) protein is Methionine--tRNA ligase.